The primary structure comprises 291 residues: B3 domain-containing protein At2g16210 (291 aa).

Positions 19-114 form a DNA-binding region, TF-B3 1; that stretch reads FFKVVQSINV…HFTVNIFKLD (96 aa). The segment covering 149–159 has biased composition (polar residues); sequence VSSNRGQTTAA. The segment at 149–182 is disordered; that stretch reads VSSNRGQTTAAESKGRKLNLGKRAAKESQSSKRT. The segment covering 172–182 has biased composition (basic and acidic residues); it reads AAKESQSSKRT. A DNA-binding region (TF-B3 2) is located at residues 200 to 291; that stretch reads AAAFTILFKQ…KELLLVVSKP (92 aa).

It is found in the nucleus. This chain is B3 domain-containing protein At2g16210, found in Arabidopsis thaliana (Mouse-ear cress).